The chain runs to 293 residues: Cbb3-type cytochrome c oxidase subunit FixP (293 aa).

Basic and acidic residues predominate over residues 1 to 11; that stretch reads MSTSHESHHAP. Positions 1–25 are disordered; sequence MSTSHESHHAPVDGAGGPSTTGHEW. The chain crosses the membrane as a helical span at residues 43–63; sequence FYATIIWAFGYWVAYPAWPLV. Cytochrome c domains follow at residues 114–201 and 209–290; these read LARA…RSLS and PAAK…HTLG. The heme c site is built by Cys-127, Cys-130, His-131, Met-178, Cys-222, Cys-225, His-226, and Met-267.

It belongs to the CcoP / FixP family. Component of the cbb3-type cytochrome c oxidase at least composed of FixN, FixO, FixQ and FixP. The cofactor is heme c.

It is found in the cell inner membrane. It functions in the pathway energy metabolism; oxidative phosphorylation. Functionally, C-type cytochrome. Part of the cbb3-type cytochrome c oxidase complex. FixP subunit is required for transferring electrons from donor cytochrome c via its heme groups to FixO subunit. From there, electrons are shuttled to the catalytic binuclear center of FixN subunit where oxygen reduction takes place. The complex also functions as a proton pump. In Azorhizobium caulinodans (strain ATCC 43989 / DSM 5975 / JCM 20966 / LMG 6465 / NBRC 14845 / NCIMB 13405 / ORS 571), this protein is Cbb3-type cytochrome c oxidase subunit FixP.